Here is a 205-residue protein sequence, read N- to C-terminus: MGTMMRIGLTGGIAAGKSTVAARLKQLGALHIDYDALAHQIVEPGGVALPQIVAEFGPDALLADGTMNRPWIADHVFGANAAPGARERLDAIEHPLIYAEAARLEHEHPEAAIIIHDIPLLAEVIDDIPFAFDHIVTVEAPVCMRLDRMVEERGMSLEQAEARIRHQSSEEERRAIADIVIDSTHPLPEMLAQVGEIYAGWCAGR.

In terms of domain architecture, DPCK spans 6 to 205 (RIGLTGGIAA…EIYAGWCAGR (200 aa)). ATP is bound at residue 14 to 19 (AAGKST).

It belongs to the CoaE family.

Its subcellular location is the cytoplasm. The catalysed reaction is 3'-dephospho-CoA + ATP = ADP + CoA + H(+). It participates in cofactor biosynthesis; coenzyme A biosynthesis; CoA from (R)-pantothenate: step 5/5. Functionally, catalyzes the phosphorylation of the 3'-hydroxyl group of dephosphocoenzyme A to form coenzyme A. In Bifidobacterium longum (strain NCC 2705), this protein is Dephospho-CoA kinase.